A 215-amino-acid polypeptide reads, in one-letter code: Pyrrolidone-carboxylate peptidase (215 aa).

Catalysis depends on residues Glu-80, Cys-143, and His-167.

Belongs to the peptidase C15 family. Homotetramer.

It localises to the cytoplasm. The catalysed reaction is Release of an N-terminal pyroglutamyl group from a polypeptide, the second amino acid generally not being Pro.. In terms of biological role, removes 5-oxoproline from various penultimate amino acid residues except L-proline. In Bacillus mycoides (strain KBAB4) (Bacillus weihenstephanensis), this protein is Pyrrolidone-carboxylate peptidase.